The chain runs to 502 residues: Glycerol kinase (502 aa).

Thr-16 is an ADP binding site. Thr-16, Thr-17, and Ser-18 together coordinate ATP. Sn-glycerol 3-phosphate is bound at residue Thr-16. ADP is bound at residue Arg-20. Sn-glycerol 3-phosphate contacts are provided by Arg-86, Glu-87, Tyr-138, and Asp-247. Glycerol-binding residues include Arg-86, Glu-87, Tyr-138, Asp-247, and Gln-248. ADP is bound by residues Thr-269 and Gly-312. Residues Thr-269, Gly-312, Gln-316, and Gly-413 each contribute to the ATP site. Gly-413 and Asn-417 together coordinate ADP.

The protein belongs to the FGGY kinase family.

It catalyses the reaction glycerol + ATP = sn-glycerol 3-phosphate + ADP + H(+). It functions in the pathway polyol metabolism; glycerol degradation via glycerol kinase pathway; sn-glycerol 3-phosphate from glycerol: step 1/1. Inhibited by fructose 1,6-bisphosphate (FBP). Key enzyme in the regulation of glycerol uptake and metabolism. Catalyzes the phosphorylation of glycerol to yield sn-glycerol 3-phosphate. The protein is Glycerol kinase of Dechloromonas aromatica (strain RCB).